The primary structure comprises 245 residues: Acetylglutamate kinase (245 aa).

Residues 41–42 (GG), R63, and N156 contribute to the substrate site.

The protein belongs to the acetylglutamate kinase family. ArgB subfamily.

It is found in the cytoplasm. It catalyses the reaction N-acetyl-L-glutamate + ATP = N-acetyl-L-glutamyl 5-phosphate + ADP. It functions in the pathway amino-acid biosynthesis; L-arginine biosynthesis; N(2)-acetyl-L-ornithine from L-glutamate: step 2/4. Functionally, catalyzes the ATP-dependent phosphorylation of N-acetyl-L-glutamate. The chain is Acetylglutamate kinase from Leuconostoc citreum (strain KM20).